Consider the following 290-residue polypeptide: Sodium/potassium-transporting ATPase subunit beta-2 (290 aa).

Topologically, residues 1–39 (MVIQKEKKSCGQVVEEWKEFVWNPRTHQFMGRTGTSWAF) are cytoplasmic. The chain crosses the membrane as a helical; Signal-anchor for type II membrane protein span at residues 40-67 (ILLFYLVFYGFLTAMFSLTMWVMLQTVS). Topologically, residues 68 to 290 (DHTPKYQDRL…VAFKLRINKT (223 aa)) are extracellular. 2 N-linked (GlcNAc...) asparagine glycosylation sites follow: N96 and N118. C129 and C150 are oxidised to a cystine. N153 carries an N-linked (GlcNAc...) asparagine glycan. The cysteines at positions 160 and 177 are disulfide-linked. Residues N193, N197, N220, and N238 are each glycosylated (N-linked (GlcNAc...) asparagine). An immunoglobulin-like region spans residues 193–290 (NQSMNVTCVG…VAFKLRINKT (98 aa)). The cysteines at positions 200 and 261 are disulfide-linked.

The protein belongs to the X(+)/potassium ATPases subunit beta family. In terms of assembly, the sodium/potassium-transporting ATPase is composed of a catalytic alpha subunit, an auxiliary non-catalytic beta subunit and an additional regulatory subunit. Interacts with isoform 2 of BSG.

Its subcellular location is the cell membrane. Functionally, this is the non-catalytic component of the active enzyme, which catalyzes the hydrolysis of ATP coupled with the exchange of Na(+) and K(+) ions across the plasma membrane. The exact function of the beta-2 subunit is not known. In terms of biological role, mediates cell adhesion of neurons and astrocytes, and promotes neurite outgrowth. This chain is Sodium/potassium-transporting ATPase subunit beta-2 (Atp1b2), found in Mus musculus (Mouse).